Reading from the N-terminus, the 565-residue chain is E3 ubiquitin-protein ligase ipaH7.8 (565 aa).

Positions 1–22 (MFSVNNTHSSVSCSPSINSNST) are disordered. Residues 1 to 262 (MFSVNNTHSS…YHGPQIYFSM (262 aa)) form an interaction with target proteins region. Residues 9–22 (SSVSCSPSINSNST) are compositionally biased toward low complexity. 9 LRR repeats span residues 58–79 (QEAV…PKHI), 80–97 (SALI…KLPA), 98–119 (FLKE…PESL), 120–137 (TTLS…VLPN), 138–157 (HLTS…ALPE), 158–179 (KLKF…PDKL), 180–199 (EILC…SDRN), 202–223 (RQKE…FSQL), and 225–248 (SSYR…QRLT). The segment at 263–270 (SDGQQNTL) is linker. Positions 271–565 (HRPLADAVTA…SENGSRLHHS (295 aa)) are E3 ubiquitin-protein ligase catalytic domain. Residues 273–565 (PLADAVTAWF…SENGSRLHHS (293 aa)) form the NEL domain. Catalysis depends on Cys-357, which acts as the Glycyl thioester intermediate.

The protein belongs to the LRR-containing bacterial E3 ligase family. Ubiquitinated in the presence of host E1 ubiquitin-activating enzyme, E2 ubiquitin-conjugating enzyme and ubiquitin.

Its subcellular location is the secreted. It is found in the host cytoplasm. It carries out the reaction S-ubiquitinyl-[E2 ubiquitin-conjugating enzyme]-L-cysteine + [acceptor protein]-L-lysine = [E2 ubiquitin-conjugating enzyme]-L-cysteine + N(6)-ubiquitinyl-[acceptor protein]-L-lysine.. It functions in the pathway protein modification; protein ubiquitination. In terms of biological role, E3 ubiquitin ligase effector protein that interferes with host's innate immunity. Functions to alter host cell physiology and promote bacterial survival in host tissues. Catalyzes ubiquitination of human gasdermins GSDMB and GSDMD, promoting their degradation by the proteasome, thereby preventing cell death. In contrast, activates host cell pyroptosis in mouse cells: catalyzes ubiquitination of mouse Nlrp1b allele 1 protein, releasing the cleaved C-terminal part of Nlrp1b, which polymerizes and forms the Nlrp1b inflammasome followed by host cell pyroptosis. Does not catalyze ubiquitination of mouse GSDMD. This is E3 ubiquitin-protein ligase ipaH7.8 from Shigella flexneri.